A 653-amino-acid polypeptide reads, in one-letter code: Fructose-1,6-bisphosphatase class 3 2 (653 aa).

It belongs to the FBPase class 3 family. The cofactor is Mn(2+).

It catalyses the reaction beta-D-fructose 1,6-bisphosphate + H2O = beta-D-fructose 6-phosphate + phosphate. It participates in carbohydrate biosynthesis; gluconeogenesis. This chain is Fructose-1,6-bisphosphatase class 3 2, found in Clostridium beijerinckii (strain ATCC 51743 / NCIMB 8052) (Clostridium acetobutylicum).